The primary structure comprises 225 residues: ATP-dependent dethiobiotin synthetase BioD 1 (225 aa).

Residues Glu13 and Thr17 each coordinate Mg(2+). 13–18 (EVGKTV) contributes to the ATP binding site. Residue Lys38 is part of the active site. Position 42 (Ser42) interacts with substrate. 2 residues coordinate Mg(2+): Asp55 and Glu116. Residues Asp55, 116-119 (EGAG), and 176-177 (ND) contribute to the ATP site. Tyr188 lines the substrate pocket. Residues 205-207 (PWL) and Glu212 each bind ATP.

It belongs to the dethiobiotin synthetase family. In terms of assembly, homodimer. Mg(2+) serves as cofactor.

It is found in the cytoplasm. It carries out the reaction (7R,8S)-7,8-diammoniononanoate + CO2 + ATP = (4R,5S)-dethiobiotin + ADP + phosphate + 3 H(+). It functions in the pathway cofactor biosynthesis; biotin biosynthesis; biotin from 7,8-diaminononanoate: step 1/2. Catalyzes a mechanistically unusual reaction, the ATP-dependent insertion of CO2 between the N7 and N8 nitrogen atoms of 7,8-diaminopelargonic acid (DAPA, also called 7,8-diammoniononanoate) to form a ureido ring. Only CTP can partially replace ATP while diaminobiotin is only 37% as effective as 7,8-diaminopelargonic acid. In another study both CTP and GTP (but not ITP, TTP or UTP) can partially replace ATP. In Escherichia coli (strain K12), this protein is ATP-dependent dethiobiotin synthetase BioD 1.